Reading from the N-terminus, the 454-residue chain is MELATRYQIPKEVADIFNAPSDDEEFVGFRDDVPMETLSSEESCDSFDSLESGKQQDVRFHSKYFTEELRRIFIEDTDSETEDFAGFTQSDLNGKTNPEVMVVESDLSDDGKASLVSEEEEDEEEDKATPRRSRSRRSSIGLRVAFQFPTKKLANKPDKNSSSEQLFSSARLQNEKKTILERKKDCRQVIQREDSTSESEDDSRDESQESSDALLKRTMNIKENKAMLAQLLAELNSMPDFFPVRTPTSASRKKTVRRAFSEGQITRRMNPTRSARPPEKFALENFTVSAAKFAEEFYSFRRRKTIGGKCREYRRRHRISSFRPVEDITEEDLENVAITVRDKIYDKVLGNTCHQCRQKTIDTKTVCRNQGCCGVRGQFCGPCLRNRYGEDVRSALLDPDWVCPPCRGICNCSYCRKRDGRCATGILIHLAKFYGYDNVKEYLESLQKELVEDN.

Residues 9-33 (IPKEVADIFNAPSDDEEFVGFRDDV) carry the Integrase domain-binding motif 1 (IBM1) motif. The residue at position 21 (Ser21) is a Phosphoserine. The Integrase domain-binding motif 2 (IBM2) motif lies at 65–91 (FTEELRRIFIEDTDSETEDFAGFTQSD). Phosphothreonine is present on Thr77. Phosphoserine is present on Ser79. Residues Thr81 and Thr88 each carry the phosphothreonine modification. Disordered regions lie at residues 103–169 (VESD…LFSS) and 188–213 (QVIQ…SSDA). Ser105, Ser108, Ser117, Ser138, Ser139, Ser162, Ser195, and Ser197 each carry phosphoserine. The segment covering 117-126 (SEEEEDEEED) has biased composition (acidic residues). The interval 213-235 (ALLKRTMNIKENKAMLAQLLAEL) is MYC-binding. Residues Lys222 and Lys225 each participate in a glycyl lysine isopeptide (Lys-Gly) (interchain with G-Cter in SUMO2) cross-link. Ser261 is modified (phosphoserine).

In terms of assembly, interacts with MYC. Interacts (via IBM motifs) with PSIP1 (via IBD domain); phosphorylation increases its affinity for PSIP1. In terms of processing, phosphorylation increases its interaction with PSIP1. In terms of tissue distribution, ubiquitous. Overexpressed in medulloblastoma.

Its subcellular location is the cytoplasm. It is found in the nucleus. Its function is as follows. Plays a role in transcriptional regulation as a repressor that inhibits monoamine oxidase A (MAOA) activity and gene expression by binding to the promoter. Plays an important oncogenic role in mediating the full transforming effect of MYC in medulloblastoma cells. Involved in apoptotic signaling pathways; May act downstream of P38-kinase and BCL-2, but upstream of CASP3/caspase-3 as well as CCND1/cyclin D1 and E2F1. This Homo sapiens (Human) protein is Cell division cycle-associated 7-like protein (CDCA7L).